Here is a 366-residue protein sequence, read N- to C-terminus: 1-deoxy-D-xylulose 5-phosphate reductoisomerase (366 aa).

NADPH is bound by residues T7, G8, S9, I10, G31, K32, N33, and N113. Position 114 (K114) interacts with 1-deoxy-D-xylulose 5-phosphate. E115 contributes to the NADPH binding site. D133 is a Mn(2+) binding site. Positions 134, 135, 158, and 181 each coordinate 1-deoxy-D-xylulose 5-phosphate. Mn(2+) is bound at residue E135. An NADPH-binding site is contributed by G187. 1-deoxy-D-xylulose 5-phosphate is bound by residues S194, N199, K200, and E203. A Mn(2+)-binding site is contributed by E203.

Belongs to the DXR family. It depends on Mg(2+) as a cofactor. The cofactor is Mn(2+).

The enzyme catalyses 2-C-methyl-D-erythritol 4-phosphate + NADP(+) = 1-deoxy-D-xylulose 5-phosphate + NADPH + H(+). It participates in isoprenoid biosynthesis; isopentenyl diphosphate biosynthesis via DXP pathway; isopentenyl diphosphate from 1-deoxy-D-xylulose 5-phosphate: step 1/6. Its function is as follows. Catalyzes the NADPH-dependent rearrangement and reduction of 1-deoxy-D-xylulose-5-phosphate (DXP) to 2-C-methyl-D-erythritol 4-phosphate (MEP). The sequence is that of 1-deoxy-D-xylulose 5-phosphate reductoisomerase from Helicobacter pylori (strain G27).